The chain runs to 475 residues: Glutamyl-tRNA(Gln) amidotransferase subunit A (475 aa).

Catalysis depends on charge relay system residues lysine 69 and serine 144. The active-site Acyl-ester intermediate is serine 168.

The protein belongs to the amidase family. GatA subfamily. As to quaternary structure, heterotrimer of A, B and C subunits.

The enzyme catalyses L-glutamyl-tRNA(Gln) + L-glutamine + ATP + H2O = L-glutaminyl-tRNA(Gln) + L-glutamate + ADP + phosphate + H(+). Functionally, allows the formation of correctly charged Gln-tRNA(Gln) through the transamidation of misacylated Glu-tRNA(Gln) in organisms which lack glutaminyl-tRNA synthetase. The reaction takes place in the presence of glutamine and ATP through an activated gamma-phospho-Glu-tRNA(Gln). This is Glutamyl-tRNA(Gln) amidotransferase subunit A from Methanococcoides burtonii (strain DSM 6242 / NBRC 107633 / OCM 468 / ACE-M).